Reading from the N-terminus, the 83-residue chain is uncharacterized protein (83 aa).

It is found in the plastid. It localises to the chloroplast. This is an uncharacterized protein from Pinus thunbergii (Japanese black pine).